A 671-amino-acid polypeptide reads, in one-letter code: DNA ligase (671 aa).

Residues 32–36, 81–82, and Glu-113 contribute to the NAD(+) site; these read DAEYD and SL. Lys-115 serves as the catalytic N6-AMP-lysine intermediate. NAD(+) contacts are provided by Arg-136, Glu-173, Lys-290, and Lys-314. Zn(2+) contacts are provided by Cys-408, Cys-411, Cys-426, and Cys-432. The 79-residue stretch at 593 to 671 folds into the BRCT domain; the sequence is EIDSPFAGKT…EAEMLRLLGS (79 aa).

The protein belongs to the NAD-dependent DNA ligase family. LigA subfamily. Mg(2+) serves as cofactor. It depends on Mn(2+) as a cofactor.

It catalyses the reaction NAD(+) + (deoxyribonucleotide)n-3'-hydroxyl + 5'-phospho-(deoxyribonucleotide)m = (deoxyribonucleotide)n+m + AMP + beta-nicotinamide D-nucleotide.. Functionally, DNA ligase that catalyzes the formation of phosphodiester linkages between 5'-phosphoryl and 3'-hydroxyl groups in double-stranded DNA using NAD as a coenzyme and as the energy source for the reaction. It is essential for DNA replication and repair of damaged DNA. This Shigella boydii serotype 4 (strain Sb227) protein is DNA ligase.